The following is a 477-amino-acid chain: MGRTVVVLGGGISGLAASYHLSRAPCPPKVVLVEGSERLGGWIRSVRGPNGAIFELGPRGIRPAGALGARTLLLVSELGLDSEVLPVRGDHPAAQNRFLYVGGALHALPTGLRGLLRPSPPFSKPLFWAGLRELTKPRGKEPDETVHSFAQRRLGPEVASLAMDSLCRGVFAGNSRELSIRSCFPSLFQAEQTHRSVLLGLLLGAGRTPQPDSALIRQALAERWSQWSLRGGLEMLPQALETHLTSRGVSVLRGQPVCGLSLQAEGRWKVSLRDSSLEADHVISAIPASVLSELLPAEAAPLARALSAITAVSVAVVNLQYQGAHLPVQGFGHLVPSSEDPGVLGIVYDSVAFPEQDGSPPGLRVTVMLGGSWLQTLEASGCVLSQELFQQRAQEAAAAQLGLKELPSHCLVHLHKNCIPQYTLGHWQKLESARQFLAAHRLPLTLAGASYEGVAVNDCIESGRQAAVSVLGTEPNG.

FAD contacts are provided by residues 9–14 (GGGISG), W42, 57–60 (GPRG), V257, A449, and 454–456 (VAV).

It belongs to the protoporphyrinogen/coproporphyrinogen oxidase family. Protoporphyrinogen oxidase subfamily. As to quaternary structure, monomer. Homodimer. Requires FAD as cofactor.

Its subcellular location is the mitochondrion inner membrane. The enzyme catalyses protoporphyrinogen IX + 3 O2 = protoporphyrin IX + 3 H2O2. It functions in the pathway porphyrin-containing compound metabolism; protoporphyrin-IX biosynthesis; protoporphyrin-IX from protoporphyrinogen-IX: step 1/1. In terms of biological role, catalyzes the 6-electron oxidation of protoporphyrinogen-IX to form protoporphyrin-IX. The sequence is that of Protoporphyrinogen oxidase (PPOX) from Macaca fascicularis (Crab-eating macaque).